The following is a 215-amino-acid chain: Cytochrome b6 (215 aa).

A helical membrane pass occupies residues 32 to 52 (IFYCLGGITFTLFLVQVATGF). C35 contacts heme c. The heme b site is built by H86 and H100. The next 3 helical transmembrane spans lie at 90 to 110 (ASMM…TGGF), 116 to 136 (LTWI…VTGY), and 186 to 206 (LHTF…FLMI). Residues H187 and H202 each coordinate heme b.

It belongs to the cytochrome b family. PetB subfamily. The 4 large subunits of the cytochrome b6-f complex are cytochrome b6, subunit IV (17 kDa polypeptide, PetD), cytochrome f and the Rieske protein, while the 4 small subunits are PetG, PetL, PetM and PetN. The complex functions as a dimer. Heme b is required as a cofactor. Requires heme c as cofactor.

It localises to the plastid. The protein resides in the chloroplast thylakoid membrane. Component of the cytochrome b6-f complex, which mediates electron transfer between photosystem II (PSII) and photosystem I (PSI), cyclic electron flow around PSI, and state transitions. This Tupiella akineta (Green alga) protein is Cytochrome b6.